We begin with the raw amino-acid sequence, 506 residues long: Lysine--tRNA ligase (506 aa).

Positions 416 and 423 each coordinate Mg(2+).

This sequence belongs to the class-II aminoacyl-tRNA synthetase family. In terms of assembly, homodimer. Mg(2+) serves as cofactor.

The protein resides in the cytoplasm. The catalysed reaction is tRNA(Lys) + L-lysine + ATP = L-lysyl-tRNA(Lys) + AMP + diphosphate. In Bordetella bronchiseptica (strain ATCC BAA-588 / NCTC 13252 / RB50) (Alcaligenes bronchisepticus), this protein is Lysine--tRNA ligase.